We begin with the raw amino-acid sequence, 428 residues long: Tyrosine--tRNA ligase (428 aa).

Y37 contacts L-tyrosine. The 'HIGH' region signature appears at 42 to 51; it reads PTGSSLHAGH. Residues Y175 and Q179 each coordinate L-tyrosine. The short motif at 235–239 is the 'KMSKS' region element; it reads KFGKS. Residue K238 participates in ATP binding. An S4 RNA-binding domain is found at 358–415; that stretch reads ATILDLLVESGLEKSKGAARRTVGEGGAYVNNQRIEDIEWSPSAEELLHGSWLVLRKG.

Belongs to the class-I aminoacyl-tRNA synthetase family. TyrS type 1 subfamily. In terms of assembly, homodimer.

The protein localises to the cytoplasm. The enzyme catalyses tRNA(Tyr) + L-tyrosine + ATP = L-tyrosyl-tRNA(Tyr) + AMP + diphosphate + H(+). In terms of biological role, catalyzes the attachment of tyrosine to tRNA(Tyr) in a two-step reaction: tyrosine is first activated by ATP to form Tyr-AMP and then transferred to the acceptor end of tRNA(Tyr). In Corynebacterium jeikeium (strain K411), this protein is Tyrosine--tRNA ligase.